A 106-amino-acid polypeptide reads, in one-letter code: ATP-dependent Clp protease adapter protein ClpS (106 aa).

The protein belongs to the ClpS family. Binds to the N-terminal domain of the chaperone ClpA.

Involved in the modulation of the specificity of the ClpAP-mediated ATP-dependent protein degradation. This is ATP-dependent Clp protease adapter protein ClpS from Vibrio campbellii (strain ATCC BAA-1116).